The chain runs to 183 residues: Acyl-homoserine-lactone synthase (183 aa).

Belongs to the autoinducer synthase family.

It catalyses the reaction a fatty acyl-[ACP] + S-adenosyl-L-methionine = an N-acyl-L-homoserine lactone + S-methyl-5'-thioadenosine + holo-[ACP] + H(+). Functionally, involved in the synthesis of the acyl-homoserine lactone (AHL) signal N-(3-hydroxydodecanoyl)-L-HSL (3-hydroxy-C(12)-HSL or OH-dDHL). Probably part of a quorum-sensing system with AnoR. This Acinetobacter nosocomialis protein is Acyl-homoserine-lactone synthase.